A 230-amino-acid chain; its full sequence is PKHD-type hydroxylase PD_1553 (230 aa).

The 105-residue stretch at 78 to 182 folds into the Fe2OG dioxygenase domain; sequence RTLPPRFNRY…RIASFFWVQS (105 aa). Residues H96, D98, and H163 each coordinate Fe cation. R173 contributes to the 2-oxoglutarate binding site.

Fe(2+) is required as a cofactor. It depends on L-ascorbate as a cofactor.

The sequence is that of PKHD-type hydroxylase PD_1553 from Xylella fastidiosa (strain Temecula1 / ATCC 700964).